The sequence spans 895 residues: Procollagen lysyl hydroxylase and glycosyltransferase (895 aa).

The interval 1–194 (MISRTYVINL…PSDEFIPIMH (194 aa)) is lysyl hydroxylase region. A glucosyl transferase region region spans residues 537 to 895 (YYFYISGDCI…KRYILVSFVN (359 aa)). The Fe2OG dioxygenase domain occupies 805–895 (DINLAFVVKY…KRYILVSFVN (91 aa)). Residues His825, Asp827, and His877 each coordinate Fe cation. The active site involves Arg887.

Fe cation serves as cofactor. It depends on L-ascorbate as a cofactor.

It catalyses the reaction L-lysyl-[collagen] + 2-oxoglutarate + O2 = (5R)-5-hydroxy-L-lysyl-[collagen] + succinate + CO2. Functionally, displays two enzymatic activities involved in procollagen processing. Forms hydroxylysine residues in -Xaa-Lys-Gly- sequences in collagens. These hydroxylysines are subsequentially glucosylated by a glucosyltransferase activity. Collagen post-translationally modified is detected in mimivirus virion. The polypeptide is Procollagen lysyl hydroxylase and glycosyltransferase (Acanthamoeba polyphaga (Amoeba)).